Here is a 167-residue protein sequence, read N- to C-terminus: uncharacterized protein (167 aa).

Residues 28-59 (LTGIREELKADIDETRLIAESVLEEKEKKVVE) are a coiled coil.

This is an uncharacterized protein from Aquifex aeolicus (strain VF5).